Reading from the N-terminus, the 281-residue chain is Complement C1q tumor necrosis factor-related protein 1 (281 aa).

The signal sequence occupies residues 1–25; it reads MGSCAQGFMLGCCLLLAITWGPILS. Residues 35–68 are disordered; sequence QEWEETEELPSPLDPVTRPEETREKYSPRQGEDL. Positions 51–66 are enriched in basic and acidic residues; it reads TRPEETREKYSPRQGE. Asparagine 93 carries an N-linked (GlcNAc...) asparagine glycan. The 42-residue stretch at 99–140 folds into the Collagen-like domain; that stretch reads GEKGDRGDRGLQGKYGKIGSTGPRGHVGPKGQKGSIGAPGNH. Residues 107–136 are disordered; sequence RGLQGKYGKIGSTGPRGHVGPKGQKGSIGA. Positions 141–281 constitute a C1q domain; the sequence is CKSQYAAFSV…GYLVKPASEP (141 aa).

It is found in the secreted. This is Complement C1q tumor necrosis factor-related protein 1 (C1qtnf1) from Mus musculus (Mouse).